A 586-amino-acid chain; its full sequence is 3-hydroxy-3-methylglutaryl-coenzyme A reductase 3 (586 aa).

Helical transmembrane passes span 36 to 59 (PSDYSLPLSLYLANALVFSLFFSV) and 87 to 107 (ALICLVASVIYLLGFFGIGFV). The tract at residues 108-170 (HSFSRASTDS…STTTTSTLSD (63 aa)) is linker. Catalytic stretches follow at residues 171–586 (DDEQ…KITF) and 172–586 (DEQI…KITF). Active-site charge relay system residues include glutamate 265, lysine 397, and aspartate 473. The Proton donor role is filled by histidine 571. An N-linked (GlcNAc...) asparagine glycan is attached at asparagine 575.

This sequence belongs to the HMG-CoA reductase family.

The protein localises to the endoplasmic reticulum membrane. Its subcellular location is the mitochondrion membrane. The protein resides in the plastid membrane. It catalyses the reaction (R)-mevalonate + 2 NADP(+) + CoA = (3S)-3-hydroxy-3-methylglutaryl-CoA + 2 NADPH + 2 H(+). Its pathway is metabolic intermediate biosynthesis; (R)-mevalonate biosynthesis; (R)-mevalonate from acetyl-CoA: step 3/3. In terms of biological role, catalyzes the synthesis of mevalonate. The specific precursor of all isoprenoid compounds present in plants. The chain is 3-hydroxy-3-methylglutaryl-coenzyme A reductase 3 (HMGR3) from Hevea brasiliensis (Para rubber tree).